Here is a 247-residue protein sequence, read N- to C-terminus: 2,3-bisphosphoglycerate-dependent phosphoglycerate mutase (247 aa).

Residues 8 to 15 (RHGESVWN), 21 to 22 (TG), arginine 60, 87 to 90 (ERHY), lysine 98, 114 to 115 (RR), and 183 to 184 (GN) contribute to the substrate site. The active-site Tele-phosphohistidine intermediate is the histidine 9. The active-site Proton donor/acceptor is the glutamate 87.

The protein belongs to the phosphoglycerate mutase family. BPG-dependent PGAM subfamily.

The enzyme catalyses (2R)-2-phosphoglycerate = (2R)-3-phosphoglycerate. It participates in carbohydrate degradation; glycolysis; pyruvate from D-glyceraldehyde 3-phosphate: step 3/5. In terms of biological role, catalyzes the interconversion of 2-phosphoglycerate and 3-phosphoglycerate. In Thermobifida fusca (strain YX), this protein is 2,3-bisphosphoglycerate-dependent phosphoglycerate mutase.